A 218-amino-acid chain; its full sequence is Ribose-5-phosphate isomerase A (218 aa).

Substrate is bound by residues 28–31 (TGST), 81–84 (DGAD), and 94–97 (KGGG). Glu-103 serves as the catalytic Proton acceptor. Residue Lys-121 participates in substrate binding.

This sequence belongs to the ribose 5-phosphate isomerase family. In terms of assembly, homodimer.

It catalyses the reaction aldehydo-D-ribose 5-phosphate = D-ribulose 5-phosphate. The protein operates within carbohydrate degradation; pentose phosphate pathway; D-ribose 5-phosphate from D-ribulose 5-phosphate (non-oxidative stage): step 1/1. Its function is as follows. Catalyzes the reversible conversion of ribose-5-phosphate to ribulose 5-phosphate. The chain is Ribose-5-phosphate isomerase A from Alcanivorax borkumensis (strain ATCC 700651 / DSM 11573 / NCIMB 13689 / SK2).